The sequence spans 100 residues: Small ribosomal subunit protein uS14c (100 aa).

It belongs to the universal ribosomal protein uS14 family. In terms of assembly, part of the 30S ribosomal subunit.

Its subcellular location is the plastid. It localises to the chloroplast. In terms of biological role, binds 16S rRNA, required for the assembly of 30S particles. The protein is Small ribosomal subunit protein uS14c of Thalassiosira pseudonana (Marine diatom).